The sequence spans 1278 residues: ABC transporter B family member 11 (1278 aa).

Composition is skewed to basic and acidic residues over residues 1-13 (MNGD…DSVS) and 21-35 (SPKE…EKSE). Residues 1-35 (MNGDGAREGDSVSHEPSTSKSPKEGEETKKEEKSE) form a disordered region. 6 helical membrane-spanning segments follow: residues 55–75 (VLLM…LPFM), 106–126 (FVYL…CWMI), 182–202 (FIQL…KGWL), 205–225 (LVML…ALIV), 285–305 (GLGL…AIWF), and 314–334 (GYTG…SMSL). Positions 58–346 (MICGSIGAIG…TSPCVTAFAA (289 aa)) constitute an ABC transmembrane type-1 1 domain. Positions 381–617 (IELKDVHFSY…SEGAYSQLIR (237 aa)) constitute an ABC transporter 1 domain. 416-423 (GESGSGKS) contributes to the ATP binding site. N-linked (GlcNAc...) asparagine glycans are attached at residues Asn-483, Asn-568, and Asn-653. The segment covering 629–654 (ELSSGSSFRNSNLKKSMEGTSSVGNS) has biased composition (polar residues). The disordered stretch occupies residues 629–656 (ELSSGSSFRNSNLKKSMEGTSSVGNSSR). In terms of domain architecture, ABC transmembrane type-1 2 spans 710–997 (LLLGTVAAAI…SSTFAPDSSK (288 aa)). A run of 2 helical transmembrane segments spans residues 711 to 731 (LLGT…GILI) and 751 to 771 (FWAI…PTQM). N-linked (GlcNAc...) asparagine glycosylation occurs at Asn-806. 4 helical membrane-spanning segments follow: residues 824–844 (ALVG…ASGL), 845–865 (IIAF…LPLI), 932–952 (GFIS…VYAT), and 971–991 (VFQV…SSTF). An ABC transporter 2 domain is found at 1032–1271 (IELRHLSFTY…EGGVYASLVQ (240 aa)). 1067 to 1074 (GESGSGKS) lines the ATP pocket. Residues Asn-1121 and Asn-1222 are each glycosylated (N-linked (GlcNAc...) asparagine).

Belongs to the ABC transporter superfamily. ABCB family. Multidrug resistance exporter (TC 3.A.1.201) subfamily. Present in roots and flower buds.

It localises to the membrane. The enzyme catalyses (indol-3-yl)acetate(in) + ATP + H2O = (indol-3-yl)acetate(out) + ADP + phosphate + H(+). Involved in the regulation of auxin transport required for pistil elongation. This is ABC transporter B family member 11 from Arabidopsis thaliana (Mouse-ear cress).